The following is an 819-amino-acid chain: Protein EFR3 homolog A (819 aa).

Serine 360, serine 363, serine 420, and serine 692 each carry phosphoserine.

Belongs to the EFR3 family. As to quaternary structure, component of a phosphatidylinositol 4-kinase (PI4K) complex, composed of PI4KA, EFR3 (EFR3A or EFR3B), TTC7 (TTC7A or TTC7B) and HYCC (HYCC1 or HYCC2). Palmitoylated at its N-terminus, anchoring the protein to the plasma membrane. Widely expressed. Expressed in neurons of the superior olivary complex of the auditory brainstem. Also expressed at lower levels in the cochlear nucleus, the lateral leminiscal nuclei and the inferior collicus.

It is found in the cell membrane. The protein localises to the cytoplasm. Its subcellular location is the cytosol. In terms of biological role, component of a complex required to localize phosphatidylinositol 4-kinase (PI4K) to the plasma membrane. The complex acts as a regulator of phosphatidylinositol 4-phosphate (PtdIns(4)P) synthesis. In the complex, EFR3A probably acts as the membrane-anchoring component. Also involved in responsiveness to G-protein-coupled receptors; it is however unclear whether this role is direct or indirect. The sequence is that of Protein EFR3 homolog A from Mus musculus (Mouse).